We begin with the raw amino-acid sequence, 379 residues long: Cytochrome b (379 aa).

The next 4 helical transmembrane spans lie at 33–53 (FGSLLGMCLVLQIFTGLFLAM), 77–98 (WLIRYMHANGASLFFICLYIHI), 113–133 (WNIGILLLFLTMATAFVGYVL), and 178–198 (FFAFHFILPFIIAALATVHLL). Residues histidine 83 and histidine 97 each coordinate heme b. The heme b site is built by histidine 182 and histidine 196. Histidine 201 contributes to the a ubiquinone binding site. 4 helical membrane passes run 226-246 (TKDFLGALIXIMFFMTLVLYF), 288-308 (LGGVVALILSILVLALLPYIH), 320-340 (ISQFLFWTLVSDLLLLTWIGG), and 347-367 (FIIIGQTASXMYFTIILIXMX).

The protein belongs to the cytochrome b family. As to quaternary structure, the cytochrome bc1 complex contains 11 subunits: 3 respiratory subunits (MT-CYB, CYC1 and UQCRFS1), 2 core proteins (UQCRC1 and UQCRC2) and 6 low-molecular weight proteins (UQCRH/QCR6, UQCRB/QCR7, UQCRQ/QCR8, UQCR10/QCR9, UQCR11/QCR10 and a cleavage product of UQCRFS1). This cytochrome bc1 complex then forms a dimer. Heme b serves as cofactor.

The protein resides in the mitochondrion inner membrane. Component of the ubiquinol-cytochrome c reductase complex (complex III or cytochrome b-c1 complex) that is part of the mitochondrial respiratory chain. The b-c1 complex mediates electron transfer from ubiquinol to cytochrome c. Contributes to the generation of a proton gradient across the mitochondrial membrane that is then used for ATP synthesis. This is Cytochrome b (MT-CYB) from Thomomys umbrinus (Southern pocket gopher).